We begin with the raw amino-acid sequence, 334 residues long: Tryptophan--tRNA ligase (334 aa).

Residues 11 to 13 (QPT) and 19 to 20 (GN) each bind ATP. Positions 12–20 (PTGKLTIGN) match the 'HIGH' region motif. Aspartate 135 lines the L-tryptophan pocket. ATP contacts are provided by residues 147-149 (GED), isoleucine 186, and 195-199 (KMSKS). Residues 195 to 199 (KMSKS) carry the 'KMSKS' region motif.

The protein belongs to the class-I aminoacyl-tRNA synthetase family. As to quaternary structure, homodimer.

It localises to the cytoplasm. The catalysed reaction is tRNA(Trp) + L-tryptophan + ATP = L-tryptophyl-tRNA(Trp) + AMP + diphosphate + H(+). Its function is as follows. Catalyzes the attachment of tryptophan to tRNA(Trp). This chain is Tryptophan--tRNA ligase, found in Blochmanniella floridana.